A 263-amino-acid polypeptide reads, in one-letter code: Pyrroline-5-carboxylate reductase (263 aa).

The protein belongs to the pyrroline-5-carboxylate reductase family.

It is found in the cytoplasm. It catalyses the reaction L-proline + NADP(+) = (S)-1-pyrroline-5-carboxylate + NADPH + 2 H(+). The catalysed reaction is L-proline + NAD(+) = (S)-1-pyrroline-5-carboxylate + NADH + 2 H(+). The protein operates within amino-acid biosynthesis; L-proline biosynthesis; L-proline from L-glutamate 5-semialdehyde: step 1/1. Catalyzes the reduction of 1-pyrroline-5-carboxylate (PCA) to L-proline. This chain is Pyrroline-5-carboxylate reductase, found in Treponema pallidum (strain Nichols).